We begin with the raw amino-acid sequence, 63 residues long: Putative F-box protein At1g47702 (63 aa).

Residues 23 to 63 (KDRISDLPNRILGKIIVKLPLDEAVRIMALSKRWKSIWDDN) enclose the F-box domain.

The sequence is that of Putative F-box protein At1g47702 from Arabidopsis thaliana (Mouse-ear cress).